The primary structure comprises 353 residues: Tsukushi (353 aa).

A signal peptide spans 1–16 (MPWPLLLLLAVSGAQT). Residues 17–58 (TRPCFPGCQCEVETFGLFDSFSLTRVDCSGLGPHIMPVPIPL) form the LRRNT domain. 10 LRR repeats span residues 59–80 (DTAH…VLAG), 85–106 (TLAG…AFSR), 109–130 (YLES…SFTS), 132–153 (PLSD…AFTT), 159–179 (ALHV…PTRA), 185–206 (TIQS…RDLP), 207–227 (LRYL…AFAG), 230–249 (GLTH…APSG), 255–276 (GLQV…EVFS), and 280–301 (SLQE…LLLH). Asn74 is a glycosylation site (N-linked (GlcNAc...) asparagine). Asn137 carries N-linked (GlcNAc...) asparagine glycosylation.

As to quaternary structure, interacts with FZD4 (via FZ domain); competes with WNT2B for binding to FZD4, inhibiting Wnt signaling and repressing peripheral eye development. Interacts with TGFB1; the interaction contributes to regulation of the hair cycle. Interacts with netrin. Interacts with CCN2.

Its subcellular location is the secreted. Its function is as follows. Contributes to various developmental events and other processes such as wound healing and cholesterol homeostasis through its interactions with multiple signaling pathways. Wnt signaling inhibitor which competes with WNT2B for binding to Wnt receptor FZD4 and represses WNT2B-dependent development of the peripheral eye. Plays a role in regulating the hair cycle by controlling TGFB1 signaling. Required for the development of the anterior commissure in the brain by inhibiting neurite outgrowth. Essential for terminal differentiation of hippocampal neural stem cells. Plays a role in regulating bone elongation and bone mass by modulating growth plate chondrocyte function and overall body size. Required for development of the inner ear through its involvement in stereocilia formation in inner hair cells. Facilitates wound healing by inhibiting secretion of TGFB1 from macrophages which prevents myofibroblast differentiation, maintaining inflammatory cell quiescence. Plays a role in cholesterol homeostasis by reducing circulating high-density lipoprotein cholesterol, lowering cholesterol efflux capacity and decreasing cholesterol-to-bile acid conversion in the liver. In one study, shown to negatively regulate sympathetic innervation in brown fat, leading to reduced energy expenditure. In another study, shown not to affect brown fat thermogenic capacity, body weight gain or glucose homeostasis. The sequence is that of Tsukushi (TSKU) from Homo sapiens (Human).